Here is a 146-residue protein sequence, read N- to C-terminus: MNSETGSIMAFLYSRWSVPIYERELPDHFQVPSLYVPPPSVFEETDTVSTFKKTYSLNVKLFHLDSVQALDEADRLADAIREARNMIPLLSESGEKTGDMVRISQIETRVGDRGEAAMVIRWSSRYYYHKTEQPVLQDIDMNSGVK.

It to B.subtilis YqbJ.

The polypeptide is Phage-like element PBSX protein XkdJ (xkdJ) (Bacillus subtilis (strain 168)).